We begin with the raw amino-acid sequence, 268 residues long: Serine/arginine-rich splicing factor SR30 (268 aa).

2 RRM domains span residues 7–82 (RTIY…IAHG) and 109–187 (YRVL…EYES). Residues 186–199 (ESRSVSRSPDDSKS) show a composition bias toward basic and acidic residues. Residues 186–268 (ESRSVSRSPD…NSPVSPVISG (83 aa)) form a disordered region. Residues S193, S210, S212, S214, S219, S221, S227, S236, S246, S256, and S260 each carry the phosphoserine modification. A compositionally biased stretch (low complexity) spans 207–247 (RGPSCSYSSKSRSVSPARSISPRSRPLSRSRSLYSSVSRSQ). The segment covering 257–268 (RSNSPVSPVISG) has biased composition (low complexity).

Belongs to the splicing factor SR family. SR subfamily. In terms of assembly, component of the spliceosome. Interacts with SNRNP35, CYP59 and CYP63. In terms of processing, phosphorylated. In terms of tissue distribution, ubiquitous.

It localises to the nucleus speckle. The protein resides in the nucleus. The protein localises to the nucleoplasm. Its subcellular location is the cytoplasm. Regulatory splicing factor that modulates alternative splicing and gene expression in specific cell types. Autoregulates its own expression. Probably involved in intron recognition and spliceosome assembly. The protein is Serine/arginine-rich splicing factor SR30 (SR30) of Arabidopsis thaliana (Mouse-ear cress).